Reading from the N-terminus, the 940-residue chain is MAKYKETLNLPKTAFPMKANLAQREPQALKRWQAMDLYGKLRNAARGRPRFILHDGPPYANGAIHIGHAVNKILKDIIVKSKSLSGFDAPYVPGWDCHGLPIELNVEKKVGKPGRKIDVASFRRACRDYARKQVNAQREDFERLGVLGDWCHPYLTMDYQFEADVIRTLGKIIEKGHLHKGVKPVHWCVDCGSALAEAEVEYQEKTSPAIDVRFPVVEEVELLARCKAEIPGAGPMSVVIWTTTPWTLPANQAVALHPALKYVLVECSAGQGRERLLLAEGLYREVLARYSAESAVILATCQGDELEGLKLQHPFYERTVPIILGEHVNLEAGTGAVHTAPGHGQDDYVVGNRYQLSIDNPVGGNGCFLPETPLFAGEPVFKANDHIIQVLKERGNLLREQSLQHSYPHCWRHKTPIIFRATPQWFINMEREGLRTAALAEIKKTRWLPGWGQQRIEGMVENRPDWCISRQRAWGTPIPLFVHCQTGELHPDTPRLMEEVARRVEEKGIEAWFELEPKELLGNQAPAYEKVGDTLDVWFDSGVTHTCVLETREELGVPADLYLEGSDQHRGWFQSSLLTSVAIRGTAPYRMVLTHGFTVDAKGKKMSKSQGNVVAPQQVMGSLGADILRLWVAATDYRGEMNVSDEILKRIADSYRRMRNTARYLLANLNGFDPTIHGVPAKDMLALDRWALDRASLLQGEIVQAYEDYNFHLIYQRVHNFCAVDMGAIYLDIIKDRQYTTQADSRARRSAQTAMYHIAEALVRWLAPVLSFTADEIWQYLPGERGESVFLTTWYEDLPSLGEEAPWGRAFWDVILAAREAIAKVLEGVRVEGRIGSSLDAEVDLYVEESLYQALRKLGDELRFVLITSYARVYPAQKRPVEALETEMPGLWTVVIPSHYPKCVRCWHHREEVGSHEDHPELCSRCVENTEGGGEQRAFA.

The short motif at 58–68 (PYANGAIHIGH) is the 'HIGH' region element. L-isoleucyl-5'-AMP is bound at residue E564. Residues 605 to 609 (KMSKS) carry the 'KMSKS' region motif. K608 contacts ATP. Residues C903, C906, C923, and C926 each contribute to the Zn(2+) site.

The protein belongs to the class-I aminoacyl-tRNA synthetase family. IleS type 1 subfamily. As to quaternary structure, monomer. Zn(2+) serves as cofactor.

The protein localises to the cytoplasm. The enzyme catalyses tRNA(Ile) + L-isoleucine + ATP = L-isoleucyl-tRNA(Ile) + AMP + diphosphate. In terms of biological role, catalyzes the attachment of isoleucine to tRNA(Ile). As IleRS can inadvertently accommodate and process structurally similar amino acids such as valine, to avoid such errors it has two additional distinct tRNA(Ile)-dependent editing activities. One activity is designated as 'pretransfer' editing and involves the hydrolysis of activated Val-AMP. The other activity is designated 'posttransfer' editing and involves deacylation of mischarged Val-tRNA(Ile). This chain is Isoleucine--tRNA ligase, found in Nitrosococcus oceani (strain ATCC 19707 / BCRC 17464 / JCM 30415 / NCIMB 11848 / C-107).